We begin with the raw amino-acid sequence, 168 residues long: Photosystem I assembly protein Ycf3 (168 aa).

TPR repeat units lie at residues 35-68 (AFTYYRDRMSAQSEGNYAEALQNYYEAMRLEIDP), 72-105 (SYILYNIGLIHTSNGEHMKALEYYFRALERNPFL), and 120-153 (GEQAIQQGDSEIAGAWFDQAAEYWKQALALTPGN).

The protein belongs to the Ycf3 family.

It localises to the plastid membrane. Functionally, essential for the assembly of the photosystem I (PSI) complex. May act as a chaperone-like factor to guide the assembly of the PSI subunits. The chain is Photosystem I assembly protein Ycf3 from Cuscuta reflexa (Southern Asian dodder).